The sequence spans 238 residues: tRNA (guanine-N(7)-)-methyltransferase (238 aa).

The S-adenosyl-L-methionine site is built by Glu68, Glu93, Asp120, and Asp143. Asp143 is a catalytic residue. Substrate contacts are provided by residues Lys147, Asp179, and 216 to 219; that span reads TKFE.

The protein belongs to the class I-like SAM-binding methyltransferase superfamily. TrmB family.

The catalysed reaction is guanosine(46) in tRNA + S-adenosyl-L-methionine = N(7)-methylguanosine(46) in tRNA + S-adenosyl-L-homocysteine. It participates in tRNA modification; N(7)-methylguanine-tRNA biosynthesis. Catalyzes the formation of N(7)-methylguanine at position 46 (m7G46) in tRNA. The polypeptide is tRNA (guanine-N(7)-)-methyltransferase (Shewanella oneidensis (strain ATCC 700550 / JCM 31522 / CIP 106686 / LMG 19005 / NCIMB 14063 / MR-1)).